The chain runs to 345 residues: MTNLTIALDAMGGDFGPRITVPACLRALASNPHLKILLVGQPDSISPLLANQNAELISRLHVIPAEHIVANDAKPSHAIRASKGTSMRVALDLVKTGEAQACVSAGNTGVLMGLAKLRLKAIDGIERPALVSVLPNQKKSKTVVLDLGANVNCDSQMLVQFAVMGAVMAEEIAGIHSPKVALLNIGEEESKGLDNIREAATVLKATPNINYIGYVEGNELLTGKTDVLVCDGFAGNVSLKTMEGVIRVFLSLIKSSTGDNKKTSWWMKLLKKWLQKRLNKRFGHMNPDQYNGASLLGLRGIVIKSHGGANENAFTAAIEQAVQAIERQIPERIASRLNTVLPKSD.

Belongs to the PlsX family. As to quaternary structure, homodimer. Probably interacts with PlsY.

It is found in the cytoplasm. The catalysed reaction is a fatty acyl-[ACP] + phosphate = an acyl phosphate + holo-[ACP]. It functions in the pathway lipid metabolism; phospholipid metabolism. Functionally, catalyzes the reversible formation of acyl-phosphate (acyl-PO(4)) from acyl-[acyl-carrier-protein] (acyl-ACP). This enzyme utilizes acyl-ACP as fatty acyl donor, but not acyl-CoA. The sequence is that of Phosphate acyltransferase from Proteus mirabilis (strain HI4320).